The chain runs to 219 residues: Cytidylate kinase (219 aa).

Position 10–18 (10–18 (GPAAAGKST)) interacts with ATP.

Belongs to the cytidylate kinase family. Type 1 subfamily.

Its subcellular location is the cytoplasm. The catalysed reaction is CMP + ATP = CDP + ADP. The enzyme catalyses dCMP + ATP = dCDP + ADP. The chain is Cytidylate kinase from Staphylococcus aureus (strain JH9).